Consider the following 92-residue polypeptide: UPF0297 protein TTE1249 (92 aa).

It belongs to the UPF0297 family.

This chain is UPF0297 protein TTE1249, found in Caldanaerobacter subterraneus subsp. tengcongensis (strain DSM 15242 / JCM 11007 / NBRC 100824 / MB4) (Thermoanaerobacter tengcongensis).